The chain runs to 351 residues: Tropomodulin-2 (351 aa).

A Phosphoserine modification is found at serine 25.

The protein belongs to the tropomodulin family. Binds to the N-terminus of tropomyosin and to actin. Binds to TMBr3 as well as to other low molecular mass tropomyosins (TM5a or TM5), but not to high molecular mass tropomyosins (TM2 or TMBr1). As to expression, neuronal-tissue specific.

It localises to the cytoplasm. Its subcellular location is the cytoskeleton. Its function is as follows. Blocks the elongation and depolymerization of the actin filaments at the pointed end. The Tmod/TM complex contributes to the formation of the short actin protofilament, which in turn defines the geometry of the membrane skeleton. The sequence is that of Tropomodulin-2 (Tmod2) from Rattus norvegicus (Rat).